Reading from the N-terminus, the 336-residue chain is Phenylalanine--tRNA ligase alpha subunit (336 aa).

Glu-251 is a binding site for Mg(2+).

Belongs to the class-II aminoacyl-tRNA synthetase family. Phe-tRNA synthetase alpha subunit type 1 subfamily. As to quaternary structure, tetramer of two alpha and two beta subunits. It depends on Mg(2+) as a cofactor.

The protein localises to the cytoplasm. It catalyses the reaction tRNA(Phe) + L-phenylalanine + ATP = L-phenylalanyl-tRNA(Phe) + AMP + diphosphate + H(+). The chain is Phenylalanine--tRNA ligase alpha subunit from Syntrophobacter fumaroxidans (strain DSM 10017 / MPOB).